A 78-amino-acid polypeptide reads, in one-letter code: Disintegrin DisBa-01 (78 aa).

Residues 1–78 form the Disintegrin domain; it reads GNELLEAGEE…AGCPRNPFHA (78 aa). 6 disulfide bridges follow: Cys-11–Cys-26, Cys-13–Cys-21, Cys-20–Cys-43, Cys-34–Cys-40, Cys-39–Cys-64, and Cys-52–Cys-71. The Cell attachment site motif lies at 56 to 58; sequence RGD.

Belongs to the venom metalloproteinase (M12B) family. P-II subfamily. P-IIa sub-subfamily. As to quaternary structure, monomer. As to expression, expressed by the venom gland.

It localises to the secreted. Functionally, this recombinant disintegrin antagonizes integrins alpha-IIb/beta-3 (ITGA2B/ITGB3) and alpha-V/beta-3 (ITGAV/ITGB3). On ITGA2B/ITGB3, it interferes with the outside/-in phosphorylation of the focal adhesion kinase (PTK2 / FAK) downstream of the integrin. It strongly inhibits platelet aggregation induced by ADP, thrombin, and collagen, abolishes and reverses dynamic platelet recruitment to immobilized fibrinogen. In vivo, it induces a dramatic increase in the tail bleeding time, and has a strong antithrombotic activity. On ITGAV/ITGB3, it inhibits the adhesion of ITGAV/ITGB3-expressing human microvascular endothelial cell line and murine melanoma cell line to vitronectin (IC(50) are 555 nM and 225 nM, respectively), and transiently inhibits their proliferation without direct cell toxicity. In vivo, it potently inhibits angiogenesis and metastasis, probably due to its capability to strongly inhibit the expression of VEGF and its receptors in endothelial cells. It also inhibits tumor cell migration in vitro. The sequence is that of Disintegrin DisBa-01 from Bothrops alternatus (Urutu).